We begin with the raw amino-acid sequence, 151 residues long: UPF0208 membrane protein YE1335 (151 aa).

Transmembrane regions (helical) follow at residues 46-66 (FGIR…IALG) and 69-89 (LGPA…GLWW).

It belongs to the UPF0208 family.

It localises to the cell inner membrane. The protein is UPF0208 membrane protein YE1335 of Yersinia enterocolitica serotype O:8 / biotype 1B (strain NCTC 13174 / 8081).